We begin with the raw amino-acid sequence, 441 residues long: Transcriptional regulatory protein ZraR (441 aa).

One can recognise a Response regulatory domain in the interval 7–121; the sequence is DILVVDDDIS…NLQATLEKAL (115 aa). Asp-56 is subject to 4-aspartylphosphate. Residues 141–370 form the Sigma-54 factor interaction domain; that stretch reads MVGKSPAMQH…LENAVERAVV (230 aa). Residues Gly-172, Thr-173, Arg-329, and Arg-359 each coordinate ATP. The H-T-H motif DNA-binding region spans 421–440; that stretch reads KTEAARQLGITRKTLLAKLS.

Post-translationally, phosphorylated by ZraS.

Its subcellular location is the cytoplasm. With respect to regulation, activity of the ZraS/ZraR two-component system is repressed by the zinc-bound form of ZraP, which probably interacts with the periplasmic region of ZraS. In terms of biological role, part of the Zra signaling pathway, an envelope stress response (ESR) system composed of the periplasmic accessory protein ZraP, the histidine kinase ZraS and the transcriptional regulator ZraR. The ZraPSR system contributes to antibiotic resistance and is important for membrane integrity in the presence of membrane-targeting biocides. ZraR is a member of the two-component regulatory system ZraS/ZraR. When activated by ZraS, acts in conjunction with sigma-54 to regulate the expression of zraP in the presence of high Zn(2+) or Pb(2+) concentrations. Also positively autoregulates the expression of the zraSR operon. In Escherichia coli O157:H7, this protein is Transcriptional regulatory protein ZraR (zraR).